We begin with the raw amino-acid sequence, 166 residues long: MDEYKSKLPRIPISKCKKIARTDPEYILTSQAAFAATAFTTELFIQMLAEETCSLAQIHKQTKTLRLNYEDLSTAIRNLDKFQFLSDVVPQTENLASLVRENKVRYTIVNPSPEIDIESEDEVDEANEPEVGEPEVDEAEVEAEVEAEAAEPETHTLDEPRPESSS.

The disordered stretch occupies residues 112 to 166 (SPEIDIESEDEVDEANEPEVGEPEVDEAEVEAEVEAEAAEPETHTLDEPRPESSS). Residues 115–151 (IDIESEDEVDEANEPEVGEPEVDEAEVEAEVEAEAAE) show a composition bias toward acidic residues. Residues 152 to 166 (PETHTLDEPRPESSS) are compositionally biased toward basic and acidic residues.

As to quaternary structure, heterotetramer. Consists of four subunits: POL2, DPB2, DPB3 and DPB4.

The protein localises to the nucleus. As accessory component of the DNA polymerase epsilon (DNA polymerase II) participates in chromosomal DNA replication. This chain is DNA polymerase epsilon subunit C (DPB3), found in Kluyveromyces lactis (strain ATCC 8585 / CBS 2359 / DSM 70799 / NBRC 1267 / NRRL Y-1140 / WM37) (Yeast).